The following is a 393-amino-acid chain: NAD(P)H-quinone oxidoreductase subunit H, chloroplastic (393 aa).

The protein belongs to the complex I 49 kDa subunit family. NDH is composed of at least 16 different subunits, 5 of which are encoded in the nucleus.

Its subcellular location is the plastid. The protein localises to the chloroplast thylakoid membrane. It catalyses the reaction a plastoquinone + NADH + (n+1) H(+)(in) = a plastoquinol + NAD(+) + n H(+)(out). The enzyme catalyses a plastoquinone + NADPH + (n+1) H(+)(in) = a plastoquinol + NADP(+) + n H(+)(out). Its function is as follows. NDH shuttles electrons from NAD(P)H:plastoquinone, via FMN and iron-sulfur (Fe-S) centers, to quinones in the photosynthetic chain and possibly in a chloroplast respiratory chain. The immediate electron acceptor for the enzyme in this species is believed to be plastoquinone. Couples the redox reaction to proton translocation, and thus conserves the redox energy in a proton gradient. This Gossypium barbadense (Sea Island cotton) protein is NAD(P)H-quinone oxidoreductase subunit H, chloroplastic.